We begin with the raw amino-acid sequence, 1262 residues long: Collagen alpha-1(III) chain (1262 aa).

An N-terminal signal peptide occupies residues 1–23 (MMSFVQKVSLFILAVFQPSVILA). A propeptide spans 24 to 150 (QQDALGGCTH…PSISGGSFSP (127 aa)) (N-terminal propeptide). The 60-residue stretch at 29 to 88 (GGCTHLGQEYADRDVWKPEPCQICVCDSGSVLCDDIICDDQELDCPNPEIPLGECCPVCP) folds into the VWFC domain. 2 disordered regions span residues 95–143 (TELP…CPSI) and 160–1000 (GSVG…GGVA). Low complexity predominate over residues 102-118 (GPKGDPGSPGSPGRTGA). The span at 119–134 (PGPPGQPGSPGAPGPP) shows a compositional bias: pro residues. Residues 145-164 (GGSFSPQYDSYDVKAGSVGM) form a nonhelical region (N-terminal) region. The interval 165–994 (GYPPQPISGF…PGPSGPPGPC (830 aa)) is triple-helical region. A compositionally biased stretch (pro residues) spans 167-190 (PPQPISGFPGPPGPSGPPGPPGHA). A compositionally biased stretch (low complexity) spans 192 to 201 (PPGSNGYQGP). The segment covering 202-216 (PGEPGQPGPSGPPGP) has biased composition (pro residues). Basic and acidic residues predominate over residues 228–240 (KDGEPGRPGRNGD). Positions 253–264 (PGMPGMPGMKGA) are enriched in low complexity. Lysine 262 is subject to 5-hydroxylysine. Residues 265–274 (RGFDGKDGAK) are compositionally biased toward basic and acidic residues. Composition is skewed to low complexity over residues 276-295 (DSGA…NGSP) and 339-376 (TAGF…QGQA). At lysine 283 the chain carries 5-hydroxylysine. A compositionally biased stretch (gly residues) spans 389–414 (GSPGGKGEMGPSGIPGGPGPPGGRGL). 2 stretches are compositionally biased toward low complexity: residues 534–549 (MRGL…SDGK) and 631–640 (PGPSGSPGLQ). Positions 641–650 (GLPGGPGPAG) are enriched in gly residues. Low complexity predominate over residues 672 to 684 (PKGENGIPGERGP). The span at 692–701 (GARGGPGPAG) shows a compositional bias: gly residues. Low complexity-rich tracts occupy residues 723 to 738 (LQGM…SPGP), 781 to 790 (TGPAGAPGPA), 802 to 817 (QGLP…PGQN), and 828 to 838 (PPGLRGEAGPP). The residue at position 859 (lysine 859) is a 5-hydroxylysine. Gly residues predominate over residues 863–872 (GSPGGPGAAG). Positions 895–904 (PGVPGPPGHP) are enriched in pro residues. Low complexity predominate over residues 927–940 (PQGAIGSPGASGAR). The span at 976–993 (AGPPGQPGLPGPSGPPGP) shows a compositional bias: pro residues. Residues 995–1003 (CGGGVASLG) are nonhelical region (C-terminal). Residues 1018-1262 (DEPKENEINL…GVDVGPVCFL (245 aa)) constitute a propeptide, C-terminal propeptide. The Fibrillar collagen NC1 domain occupies 1028–1262 (GEIMSSMKSI…GVDVGPVCFL (235 aa)). Disulfide bonds link cysteine 1058-cysteine 1090, cysteine 1098-cysteine 1260, and cysteine 1168-cysteine 1213. Residues aspartate 1076, asparagine 1078, glutamine 1079, cysteine 1081, and aspartate 1084 each contribute to the Ca(2+) site. Asparagine 1163 carries N-linked (GlcNAc...) asparagine glycosylation.

This sequence belongs to the fibrillar collagen family. In terms of assembly, trimers of identical alpha 1(III) chains. The chains are linked to each other by interchain disulfide bonds. Trimers are also cross-linked via hydroxylysines. In terms of processing, prolines at the third position of the tripeptide repeating unit (G-X-Y) are hydroxylated in some or all of the chains.

The protein localises to the secreted. Its subcellular location is the extracellular space. The protein resides in the extracellular matrix. Its function is as follows. Collagen type III occurs in most soft connective tissues along with type I collagen. The protein is Collagen alpha-1(III) chain (COL3A1) of Gallus gallus (Chicken).